Here is a 503-residue protein sequence, read N- to C-terminus: Glycosyltransferase family 92 protein ZK381.2 (503 aa).

Residues 7–27 (YKPCLLIILIFNSVILLFILI) traverse the membrane as a helical segment. The 286-residue stretch at 156-441 (KPVIICISPQ…FKCYFDSFYK (286 aa)) folds into the GT92 domain.

Belongs to the glycosyltransferase 92 family.

The protein resides in the membrane. The chain is Glycosyltransferase family 92 protein ZK381.2 from Caenorhabditis elegans.